The following is a 507-amino-acid chain: Germ cell nuclear acidic protein (507 aa).

Residues 1–51 are compositionally biased toward low complexity; that stretch reads MDSGSSSSSSSSGSSSGSCSTSGSGSTSGSSTTSSSSSSSSSSSSSSSSSS. The interval 1 to 507 is disordered; that stretch reads MDSGSSSSSS…GRGRGAKAGK (507 aa). Short sequence motifs (SUMO interaction motif 1 (SIM)) lie at residues 12–15, 66–69, 86–89, and 108–111; these read SGSS, CVVI, VCEI, and LIVI. 3 stretches are compositionally biased toward basic and acidic residues: residues 122-141, 179-354, and 431-449; these read KNTK…KEGV, SEAK…KGEM, and PQDR…RGDS. Basic residues predominate over residues 480–507; the sequence is GRGRGRGRGRGRGRGRGRGRGRGAKAGK.

The protein belongs to the serine-aspartate repeat-containing protein (SDr) family. As to quaternary structure, interacts (via SIM domains) with SUMO2; this interaction allows the GCNA recruitment to DPCs sites. Interacts with TOP2A; this interaction allows the resolution of topoisomerase II (TOP2A) DNA-protein cross-links. Germ-cells specific.

It localises to the chromosome. Its subcellular location is the nucleus. It is found in the PML body. May play a role in DNA-protein cross-links (DPCs) clearance through a SUMO-dependent recruitment to sites of DPCs, ensuring the genomic stability by protecting germ cells and early embryos from various sources of damage. Can resolve the topoisomerase II (TOP2A) DPCs. This Mus musculus (Mouse) protein is Germ cell nuclear acidic protein.